A 41-amino-acid polypeptide reads, in one-letter code: U-megalopygitoxin(4)-Mo5 (41 aa).

The N-terminal stretch at 1–23 is a signal peptide; that stretch reads MKCSLLLVVFAAMVALFAAGTNA.

This sequence belongs to the caterpillar 4 family. Expressed by the venom apparatus.

It is found in the secreted. Probable toxin. This Megalopyge opercularis (Southern flannel moth) protein is U-megalopygitoxin(4)-Mo5.